Here is a 215-residue protein sequence, read N- to C-terminus: Peptide methionine sulfoxide reductase MsrA (215 aa).

Cys58 is an active-site residue.

This sequence belongs to the MsrA Met sulfoxide reductase family.

The enzyme catalyses L-methionyl-[protein] + [thioredoxin]-disulfide + H2O = L-methionyl-(S)-S-oxide-[protein] + [thioredoxin]-dithiol. It catalyses the reaction [thioredoxin]-disulfide + L-methionine + H2O = L-methionine (S)-S-oxide + [thioredoxin]-dithiol. Has an important function as a repair enzyme for proteins that have been inactivated by oxidation. Catalyzes the reversible oxidation-reduction of methionine sulfoxide in proteins to methionine. This Pseudomonas savastanoi pv. phaseolicola (strain 1448A / Race 6) (Pseudomonas syringae pv. phaseolicola (strain 1448A / Race 6)) protein is Peptide methionine sulfoxide reductase MsrA.